We begin with the raw amino-acid sequence, 92 residues long: Sarcosine oxidase subunit delta (92 aa).

Cys-7, Cys-10, His-57, and Cys-61 together coordinate Zn(2+).

It belongs to the SoxD family. In terms of assembly, heterotetramer composed of subunits alpha (SoxA), beta (SoxB), gamma (SoxG) and delta (SoxD).

It is found in the cytoplasm. The catalysed reaction is sarcosine + (6S)-5,6,7,8-tetrahydrofolate + O2 = (6R)-5,10-methylene-5,6,7,8-tetrahydrofolate + glycine + H2O2. It carries out the reaction sarcosine + O2 + H2O = formaldehyde + glycine + H2O2. Its function is as follows. In the presence of tetrahydrofolate, catalyzes the oxidative demethylation of sarcosine to yield glycine, 5,10-methylenetetrahydrofolate and hydrogen peroxide. In the absence of tetrahydrofolate, catalyzes the oxidative demethylation of sarcosine to yield glycine, formaldehyde and hydrogen peroxide. This Rhizobium meliloti (strain 1021) (Ensifer meliloti) protein is Sarcosine oxidase subunit delta (soxD).